The following is a 482-amino-acid chain: Cobyric acid synthase (482 aa).

Positions Q249–F436 constitute a GATase cobBQ-type domain. The Nucleophile role is filled by C331. The active site involves H428.

This sequence belongs to the CobB/CobQ family. CobQ subfamily.

It participates in cofactor biosynthesis; adenosylcobalamin biosynthesis. Its function is as follows. Catalyzes amidations at positions B, D, E, and G on adenosylcobyrinic A,C-diamide. NH(2) groups are provided by glutamine, and one molecule of ATP is hydrogenolyzed for each amidation. The polypeptide is Cobyric acid synthase (Bradyrhizobium diazoefficiens (strain JCM 10833 / BCRC 13528 / IAM 13628 / NBRC 14792 / USDA 110)).